A 744-amino-acid chain; its full sequence is MEHIYQYSWIMPFIPLPVPMLIGVGLLLFPTTTKHLRRIWAFPTLFLLGLVMLLSAYFFILQLNKSYIYQYVWSWTINNDFSLEFGHLVDPLTSIMSILITTVGITVLIYSEKYMFHDQGYLRFFSYMTLFHVSMLGLVTSSNLIQIYICWEFVGMFSYLLIGFWFTRPVAANACQKAFVTNRVGDFSFLLGILGLYWITGSFEFRDLFEIFYNLVHNNEIPFFFLTLCAFLLFGGALAKSAQFPLHVWLPDAMEGPTPISALIHAATMVAAGIFLVARLLPLFIVMPYILNLISFIGIITVFLGATLALSQKDIKRGLAYSTMSQLGYMMLALGMGSYRAALFHLITHAYSKALLFLGAGSIIHSMEAFVGYSPEKSQNMVLMGGLIKHMPITKTSFLLGTLSLCGIPPLACFWSKDSILNDSWLYSPIFAIIACSTTGFTAFYMFRIYLLTFEGHLNVHFRNYSGKRSNSFYSISLWGNEGPKTLQKKKGFKTLLTMNNKKGVTFFCKKIDRIDSSVRNMTRLFTHFEAKNTLPYPHESDNTMLFPMVLLVLFTLFVGAIGIPFNQEDKNLDILSKFLTPSINLLHEKSNNSVDWYEFIPNATLSVSLSYFGIVIASVLYKPNYLSLTKLNLLNLFVKGGPNKIFGDRIRNRIYDWSYNRGYIDTFYAISLARGLRGFAEFTHFFDARVIDGITNGMGILSFFLGEGIKCVGGGRLSSYLLLYFDCVLLFLFISSFLYLFHF.

The next 16 helical transmembrane spans lie at 9 to 29, 41 to 61, 89 to 109, 125 to 145, 147 to 167, 185 to 205, 219 to 239, 258 to 278, 280 to 300, 327 to 347, 354 to 374, 396 to 416, 425 to 445, 546 to 566, 600 to 620, and 722 to 742; these read WIMP…LLLF, AFPT…FFIL, VDPL…TVLI, FSYM…SNLI, IYIC…FWFT, GDFS…SFEF, NEIP…GALA, TPIS…FLVA, LLPL…IGII, LGYM…FHLI, ALLF…VGYS, TSFL…CFWS, WLYS…TAFY, LFPM…GIPF, FIPN…IASV, and LLLY…LYLF.

It belongs to the complex I subunit 5 family. As to quaternary structure, NDH is composed of at least 16 different subunits, 5 of which are encoded in the nucleus.

It is found in the plastid. The protein localises to the chloroplast thylakoid membrane. It carries out the reaction a plastoquinone + NADH + (n+1) H(+)(in) = a plastoquinol + NAD(+) + n H(+)(out). It catalyses the reaction a plastoquinone + NADPH + (n+1) H(+)(in) = a plastoquinol + NADP(+) + n H(+)(out). In terms of biological role, NDH shuttles electrons from NAD(P)H:plastoquinone, via FMN and iron-sulfur (Fe-S) centers, to quinones in the photosynthetic chain and possibly in a chloroplast respiratory chain. The immediate electron acceptor for the enzyme in this species is believed to be plastoquinone. Couples the redox reaction to proton translocation, and thus conserves the redox energy in a proton gradient. This is NAD(P)H-quinone oxidoreductase subunit 5, chloroplastic (ndhF) from Pelargonium hortorum (Common geranium).